The primary structure comprises 94 residues: Non-specific lipid-transfer protein C4 (94 aa).

A signal peptide spans 1-26 (MAASKGNAAAAACALVLVLLAVGAEA). 4 disulfide bridges follow: Cys34/Cys72, Cys44/Cys59, Cys60/Cys85, and Cys70/Cys92. N-linked (GlcNAc...) asparagine glycosylation is present at Asn91.

Belongs to the plant LTP family.

Lipid-transfer protein that may be regulated by the transcription factor UDT1 in developing anthers and play a role in tapetum development. In Oryza sativa subsp. japonica (Rice), this protein is Non-specific lipid-transfer protein C4.